A 357-amino-acid polypeptide reads, in one-letter code: Protein RecA (357 aa).

Residue 78 to 85 coordinates ATP; the sequence is GPESSGKT.

This sequence belongs to the RecA family.

It localises to the cytoplasm. Functionally, can catalyze the hydrolysis of ATP in the presence of single-stranded DNA, the ATP-dependent uptake of single-stranded DNA by duplex DNA, and the ATP-dependent hybridization of homologous single-stranded DNAs. It interacts with LexA causing its activation and leading to its autocatalytic cleavage. The sequence is that of Protein RecA from Cereibacter sphaeroides (strain ATCC 17029 / ATH 2.4.9) (Rhodobacter sphaeroides).